A 432-amino-acid chain; its full sequence is Gamma-glutamyl phosphate reductase (432 aa).

The protein belongs to the gamma-glutamyl phosphate reductase family.

It localises to the cytoplasm. It carries out the reaction L-glutamate 5-semialdehyde + phosphate + NADP(+) = L-glutamyl 5-phosphate + NADPH + H(+). The protein operates within amino-acid biosynthesis; L-proline biosynthesis; L-glutamate 5-semialdehyde from L-glutamate: step 2/2. Catalyzes the NADPH-dependent reduction of L-glutamate 5-phosphate into L-glutamate 5-semialdehyde and phosphate. The product spontaneously undergoes cyclization to form 1-pyrroline-5-carboxylate. This chain is Gamma-glutamyl phosphate reductase, found in Deinococcus radiodurans (strain ATCC 13939 / DSM 20539 / JCM 16871 / CCUG 27074 / LMG 4051 / NBRC 15346 / NCIMB 9279 / VKM B-1422 / R1).